Consider the following 263-residue polypeptide: Glycerol uptake facilitator protein (263 aa).

The Cytoplasmic portion of the chain corresponds to 1-7 (MNIYRKK). Residues 8–36 (NIIKKCFMEFFGTGLVMFFGIGCLAASKL) form a helical membrane-spanning segment. Residues 37 to 41 (TNANF) are Extracellular-facing. The helical transmembrane segment at 42 to 62 (TQFEISCIWGFGVSIAIYFSS) threads the bilayer. The Cytoplasmic segment spans residues 63-65 (SIS). Residues 66 to 69 (GAHL) lie within the membrane without spanning it. Positions 70 to 72 (NPA) match the NPA 1 motif. The helical intramembrane region spans 70–80 (NPAVTIFFWLS). Topologically, residues 81–86 (SKLNKR) are cytoplasmic. A helical transmembrane segment spans residues 87–110 (KVLPYIISQTLGSFFFTMLTYYLY). Residues 111–145 (NNLLISFERNNNVVRGTQESLNLASIFCVYPNYNN) lie on the Extracellular side of the membrane. Residues 146–171 (SFIYDFIIEIFSTALFILIVLEFNNR) traverse the membrane as a helical segment. Over 172 to 181 (NSNYFLYNRS) the chain is Cytoplasmic. The chain crosses the membrane as a helical span at residues 182 to 198 (VAPILTGFLVCMINLVI). Residues 199–202 (NPLN) are Extracellular-facing. The stretch at 203–206 (NISL) is an intramembrane region. The NPA 2 signature appears at 207 to 209 (NPA). The segment at residues 207 to 220 (NPARDLGPKILLSL) is an intramembrane region (helical). Residues 221-236 (TGWGLFSFTGGNDNIL) are Extracellular-facing. A helical transmembrane segment spans residues 237 to 259 (YCFIPIMGPILGANLGGWIHKTL). Topologically, residues 260 to 263 (INNS) are cytoplasmic.

The protein belongs to the MIP/aquaporin (TC 1.A.8) family.

The protein resides in the cell membrane. It catalyses the reaction glycerol(in) = glycerol(out). Its function is as follows. Mediates glycerol diffusion across the cytoplasmic membrane via a pore-type mechanism. The sequence is that of Glycerol uptake facilitator protein (glpF) from Buchnera aphidicola subsp. Acyrthosiphon pisum (strain APS) (Acyrthosiphon pisum symbiotic bacterium).